Reading from the N-terminus, the 1114-residue chain is OTU domain-containing protein 4 (1114 aa).

The residue at position 1 (M1) is an N-acetylmethionine. Residues 1–22 (MEAAVGVPDGGDQGGAGPREDA) form a disordered region. A compositionally biased stretch (gly residues) spans 8 to 17 (PDGGDQGGAG). An OTU domain is found at 34–155 (LYRKLVAKDG…GNHYDIVYPI (122 aa)). The interval 39 to 45 (VAKDGSC) is cys-loop. The active site involves D42. C45 (nucleophile) is an active-site residue. A variable-loop region spans residues 94 to 104 (LENPQEWVGQV). Residue Y120 is modified to Phosphotyrosine. Phosphoserine occurs at positions 126 and 128. At T131 the chain carries Phosphothreonine. Residues 143 to 148 (FSNGNH) form a his-loop region. Residue H148 is part of the active site. A phosphoserine mark is found at S166, S199, S202, S204, and S341. A disordered region spans residues 323–449 (KHTSKNLKAP…FGLSPEERRE (127 aa)). Low complexity predominate over residues 392–404 (FSSHSSGSQSQKF). Over residues 420–435 (RKPDRERVEDFDHTSR) the composition is skewed to basic and acidic residues. At Y439 the chain carries Phosphotyrosine. S443 carries the phosphoserine modification. The residue at position 460 (Y460) is a Phosphotyrosine. A disordered region spans residues 472-567 (ALSSSSVNQS…PAEQKPAEHV (96 aa)). The span at 474–487 (SSSSVNQSASQSSN) shows a compositional bias: low complexity. Residues 496–529 (HVGDRKGSRRRMDTEERKDKDSIHGHSQLDKRPE) are compositionally biased toward basic and acidic residues. Phosphoserine occurs at positions 546, 893, and 900. The disordered stretch occupies residues 911–1114 (EFPEARGEHV…MGDGHRGQHT (204 aa)). Composition is skewed to basic and acidic residues over residues 913–922 (PEARGEHVHS) and 969–1000 (NRER…DPKT). Phosphoserine is present on residues S1006, S1011, S1014, S1023, and S1024. The segment covering 1039 to 1048 (SKQFYNQTYG) has biased composition (polar residues). A Phosphoserine modification is found at S1049. Composition is skewed to basic and acidic residues over residues 1067-1086 (VRSE…EGYQ) and 1096-1114 (FRGD…GQHT).

As to quaternary structure, interacts with MYD88; the interaction is direct. Interacts with ALKBH3; the interaction is direct. Interacts with USP7; the interaction is direct. Interacts with USP9X; the interaction is direct. Phosphorylated on Ser-202 and Ser-204 likely by CSNK2A1-CSNK2A2 serine/threonine-protein kinase complex. Activates 'Lys-63'-specific deubiquitinase activity.

It localises to the cytoplasm. The protein resides in the nucleus. It carries out the reaction Thiol-dependent hydrolysis of ester, thioester, amide, peptide and isopeptide bonds formed by the C-terminal Gly of ubiquitin (a 76-residue protein attached to proteins as an intracellular targeting signal).. Phosphorylation on Ser-202 and Ser-204 induces 'Lys-63'-specific deubiquitinase activity. Its function is as follows. Deubiquitinase which hydrolyzes the isopeptide bond between the ubiquitin C-terminus and the lysine epsilon-amino group of the target protein. May negatively regulate inflammatory and pathogen recognition signaling in innate immune response. Upon phosphorylation at Ser-202 and Ser-204 residues, via IL-1 receptor and Toll-like receptor signaling pathway, specifically deubiquitinates 'Lys-63'-polyubiquitinated MYD88 adapter protein triggering down-regulation of NF-kappa-B-dependent transcription of inflammatory mediators. Independently of the catalytic activity, acts as a scaffold for alternative deubiquitinases to assemble specific deubiquitinase-substrate complexes. Associates with USP7 and USP9X deubiquitinases to stabilize alkylation repair enzyme ALKBH3, thereby promoting the repair of alkylated DNA lesions. This chain is OTU domain-containing protein 4, found in Homo sapiens (Human).